A 315-amino-acid chain; its full sequence is Methenyltetrahydromethanopterin cyclohydrolase (315 aa).

The protein belongs to the MCH family.

It is found in the cytoplasm. The catalysed reaction is 5,10-methenyl-5,6,7,8-tetrahydromethanopterin + H2O = N(5)-formyl-5,6,7,8-tetrahydromethanopterin + H(+). It functions in the pathway one-carbon metabolism; methanogenesis from CO(2); 5,10-methenyl-5,6,7,8-tetrahydromethanopterin from CO(2): step 3/3. Its function is as follows. Catalyzes the reversible interconversion of 5-formyl-H(4)MPT to methenyl-H(4)MPT(+). The sequence is that of Methenyltetrahydromethanopterin cyclohydrolase from Methanosphaerula palustris (strain ATCC BAA-1556 / DSM 19958 / E1-9c).